The primary structure comprises 482 residues: Thymidine phosphorylase (482 aa).

Positions 1–10 (MAALMTPGTG) are excised as a propeptide. Positions 1-36 (MAALMTPGTGAPPAPGDFSGEGSQGLPDPSPEPKQL) are disordered. T6 is subject to Phosphothreonine. Substrate is bound by residues H116, R202, S217, and K221. R-V-A-A-A-L-X(5,6)-L-G-R repeat units follow at residues 265–279 (RVAAALTAMDKPLGR) and 329–342 (RVAAALDDGSALGR). R-A-L-X-X-A-L-V-L repeat units follow at residues 393-401 (RALPLALVL) and 453-461 (RALQEALVL).

This sequence belongs to the thymidine/pyrimidine-nucleoside phosphorylase family. In terms of assembly, homodimer.

The enzyme catalyses thymidine + phosphate = 2-deoxy-alpha-D-ribose 1-phosphate + thymine. It participates in pyrimidine metabolism; dTMP biosynthesis via salvage pathway; dTMP from thymine: step 1/2. Its function is as follows. May have a role in maintaining the integrity of the blood vessels. Has growth promoting activity on endothelial cells, angiogenic activity in vivo and chemotactic activity on endothelial cells in vitro. Functionally, catalyzes the reversible phosphorolysis of thymidine. The produced molecules are then utilized as carbon and energy sources or in the rescue of pyrimidine bases for nucleotide synthesis. The protein is Thymidine phosphorylase of Homo sapiens (Human).